Reading from the N-terminus, the 475-residue chain is Ribulose bisphosphate carboxylase large chain (475 aa).

Residues 1 to 2 (MS) constitute a propeptide that is removed on maturation. Pro-3 is subject to N-acetylproline. The residue at position 14 (Lys-14) is an N6,N6,N6-trimethyllysine. Residues Asn-123 and Thr-173 each coordinate substrate. The active-site Proton acceptor is Lys-175. Residue Lys-177 participates in substrate binding. Mg(2+)-binding residues include Lys-201, Asp-203, and Glu-204. Lys-201 is subject to N6-carboxylysine. His-294 functions as the Proton acceptor in the catalytic mechanism. Residues Arg-295, His-327, and Ser-379 each coordinate substrate.

The protein belongs to the RuBisCO large chain family. Type I subfamily. As to quaternary structure, heterohexadecamer of 8 large chains and 8 small chains; disulfide-linked. The disulfide link is formed within the large subunit homodimers. Mg(2+) serves as cofactor. Post-translationally, the disulfide bond which can form in the large chain dimeric partners within the hexadecamer appears to be associated with oxidative stress and protein turnover.

It is found in the plastid. Its subcellular location is the chloroplast. It carries out the reaction 2 (2R)-3-phosphoglycerate + 2 H(+) = D-ribulose 1,5-bisphosphate + CO2 + H2O. The catalysed reaction is D-ribulose 1,5-bisphosphate + O2 = 2-phosphoglycolate + (2R)-3-phosphoglycerate + 2 H(+). RuBisCO catalyzes two reactions: the carboxylation of D-ribulose 1,5-bisphosphate, the primary event in carbon dioxide fixation, as well as the oxidative fragmentation of the pentose substrate in the photorespiration process. Both reactions occur simultaneously and in competition at the same active site. This Pinus krempfii (Krempf's pine) protein is Ribulose bisphosphate carboxylase large chain.